Consider the following 536-residue polypeptide: REST corepressor 2 (536 aa).

Residues 1 to 44 (MERSGSGVLSRSRAKTVTNGNSQHSEEESSDEEHPNDSMIRVGG) form a disordered region. Residues 24 to 36 (HSEEESSDEEHPN) are compositionally biased toward basic and acidic residues. Positions 38–123 (SMIRVGGDYQ…KSLADLANFT (86 aa)) constitute an ELM2 domain. Residues 124–175 (PFPDEWTVEDKVLFEQAFSFHGKSFHRIQQMLPDKMITSLVKYYYSWKKTRT) enclose the SANT 1 domain. A disordered region spans residues 179–264 (VMDRQARKLL…RARRRPPKGM (86 aa)). Residues 197–211 (NDEIEEGDPGSDSDF) show a composition bias toward acidic residues. Over residues 249–262 (YRHHPLRARRRPPK) the composition is skewed to basic residues. A coiled-coil region spans residues 283-315 (VTIRQLDTQLVSLKRQVQKIKQTNSVLRNNLGD). The SANT 2 domain maps to 328 to 379 (KINSRWTTEEQLLAVQAVRRYGKDFAAIADVIGNKTVAQVSSFFVSYRRRFN). Residues 389–536 (AEQEVQGSSG…GLKVESPQSH (148 aa)) are disordered. A compositionally biased stretch (polar residues) spans 391–406 (QEVQGSSGRTVNTELN). A compositionally biased stretch (low complexity) spans 422-449 (SPPHSDSPLPSSEGSASGNHSSAQSSPP). Residues 450-476 (LTQPPPLLRPAPPSAPPSLLRQPPPLQ) are compositionally biased toward pro residues.

Belongs to the CoREST family.

The protein resides in the nucleus. Its function is as follows. May act as a component of a corepressor complex that represses transcription. The protein is REST corepressor 2 (rcor2) of Danio rerio (Zebrafish).